Here is a 463-residue protein sequence, read N- to C-terminus: Phytase A (463 aa).

The first 19 residues, 1–19, serve as a signal peptide directing secretion; the sequence is MAFFTVALSLYYLLSRVST. N26 is a glycosylation site (N-linked (GlcNAc...) asparagine). C29 and C38 are disulfide-bonded. N41 carries an N-linked (GlcNAc...) asparagine glycan. 6 residues coordinate 1D-myo-inositol hexakisphosphate: Q48, Y49, R79, H80, R83, and T86. Disulfide bonds link C69–C410, C211–C460, C260–C278, and C431–C439. H80 functions as the Nucleophile in the catalytic mechanism. 2 N-linked (GlcNAc...) asparagine glycosylation sites follow: N103 and N118. Residue R163 participates in 1D-myo-inositol hexakisphosphate binding. N-linked (GlcNAc...) asparagine glycosylation is present at N203. Residue D207 coordinates 1D-myo-inositol hexakisphosphate. N226 is a glycosylation site (N-linked (GlcNAc...) asparagine). K297 provides a ligand contact to 1D-myo-inositol hexakisphosphate. 2 N-linked (GlcNAc...) asparagine glycosylation sites follow: N331 and N335. Residues H357 and D358 each coordinate 1D-myo-inositol hexakisphosphate. N372 carries an N-linked (GlcNAc...) asparagine glycan.

Belongs to the histidine acid phosphatase family. Monomer. Seems to be cleaved into at least two pieces, most likely due to proteases in the supernatant. The N-terminal fragment, called phyB seems to retain phytase activity.

It is found in the secreted. The enzyme catalyses 1D-myo-inositol hexakisphosphate + H2O = 1D-myo-inositol 1,2,4,5,6-pentakisphosphate + phosphate. The catalysed reaction is 1D-myo-inositol 1,2,4,5,6-pentakisphosphate + H2O = 1D-myo-inositol 1,2,5,6-tetrakisphosphate + phosphate. It carries out the reaction 1D-myo-inositol 1,2,5,6-tetrakisphosphate + H2O = 1D-myo-inositol 1,2,6-trisphosphate + phosphate. It catalyses the reaction 1D-myo-inositol 1,2,6-trisphosphate + H2O = 1D-myo-inositol 1,2-bisphosphate + phosphate. The enzyme catalyses 1D-myo-inositol 1,2-bisphosphate + H2O = 1D-myo-inositol 2-phosphate + phosphate. In terms of biological role, catalyzes the phosphate monoester hydrolysis of phytic acid (myo-inositol hexakisphosphate), which results in the stepwise formation of myo-inositol pentakis-, tetrakis-, tris-, bis-, and monophosphates, as well as the liberation of inorganic phosphate. Myo-inositol 2-monophosphate is the end product. Has a broad substrate specificity and is also able to dephosphorylate other classic acid phosphatase substrates such as p-nitrophenyl phosphate, phenyl phosphate, fructose 1,6-bisphosphate, fructose 6-phosphate, glucose 6-phosphate, ribose 5-phosphate, alpha-glycerophosphate, beta-glycerophosphate, 3-phosphoglycerate, as well as ADP and ATP. The protein is Phytase A of Emericella nidulans (strain FGSC A4 / ATCC 38163 / CBS 112.46 / NRRL 194 / M139) (Aspergillus nidulans).